A 109-amino-acid chain; its full sequence is Small ribosomal subunit protein bS6 (109 aa).

It belongs to the bacterial ribosomal protein bS6 family.

Functionally, binds together with bS18 to 16S ribosomal RNA. This Ehrlichia canis (strain Jake) protein is Small ribosomal subunit protein bS6.